The sequence spans 87 residues: Large ribosomal subunit protein bL27 (87 aa).

The tract at residues 1-24 (MATKKAGGSSRNGRDSAGRRLGVK) is disordered.

This sequence belongs to the bacterial ribosomal protein bL27 family.

The chain is Large ribosomal subunit protein bL27 from Rickettsia massiliae (strain Mtu5).